Reading from the N-terminus, the 356-residue chain is Tyrosine recombinase XerS (356 aa).

One can recognise a Core-binding (CB) domain in the interval 16–121; the sequence is TMPWYILEYY…ALSSLYKYLT (106 aa). The region spanning 169–354 is the Tyr recombinase domain; sequence EFLQYIDREY…VNDEQKNALN (186 aa). Active-site residues include arginine 210, lysine 234, histidine 306, arginine 309, and histidine 332. Residue tyrosine 341 is the O-(3'-phospho-DNA)-tyrosine intermediate of the active site.

This sequence belongs to the 'phage' integrase family. XerS subfamily.

The protein resides in the cytoplasm. FtsK is required for recombination. Functionally, site-specific tyrosine recombinase, which acts by catalyzing the cutting and rejoining of the recombining DNA molecules. Essential to convert dimers of the bacterial chromosome into monomers to permit their segregation at cell division. The sequence is that of Tyrosine recombinase XerS from Streptococcus gordonii (strain Challis / ATCC 35105 / BCRC 15272 / CH1 / DL1 / V288).